The chain runs to 577 residues: MLCLGAMSERSERYLVTSALPYANGPLHVGHMVGAYLPADIFVRYLRMRGEDVVYVCGTDEHGVPITLTAEREGKSPREVVDYWYAHMKETFARFSISFDNFSRTSTPLHAQNTQLFYRKLKEGGYISEAESKQMYSPTEGRFLPDRYVEGTCPVCGYKEARGDQCDNCGSWYEAYELIEPHSKITGGPVEVRTTTHLYLDLPKFAGRLKDWISSQRHWREPVKNFIISMIEGGLERRPITRDISWGVPVPEPGFEDKRFYVWFDAPIGYVSSTQEWAERTGEPDRWREYWQDPGTRLIHFIGKDNTVFHTTMWPAMLMGVAEDGEEPYILPYDVPANEFMNLEVPVEGERRAVQMSTSRNLAVWLHEALDRFPADPLRFYLASTLPETGDVVFSWREFQSRVNSDLIGNLGNYINRVLSFTERYFGGTLERPSRLPAAAQEAFEDFRALEESYGRKMLDERPREAFAELLALGRRANRFFDAAAPWKTRKEDPERARADLYACCALLGSIAYHASPYVPEAMERLQGFFEGPVERITDLKPPGAYRSAGARPLFSRVEDEAVARAEEQLSRALLGR.

Residues 21-31 (PYANGPLHVGH) carry the 'HIGH' region motif. Zn(2+)-binding residues include cysteine 153, cysteine 156, cysteine 166, and cysteine 169. The 'KMSKS' region motif lies at 355–359 (QMSTS). ATP is bound at residue threonine 358.

The protein belongs to the class-I aminoacyl-tRNA synthetase family. MetG type 1 subfamily. Monomer. Zn(2+) is required as a cofactor.

It localises to the cytoplasm. It carries out the reaction tRNA(Met) + L-methionine + ATP = L-methionyl-tRNA(Met) + AMP + diphosphate. Its function is as follows. Is required not only for elongation of protein synthesis but also for the initiation of all mRNA translation through initiator tRNA(fMet) aminoacylation. This is Methionine--tRNA ligase from Rubrobacter xylanophilus (strain DSM 9941 / JCM 11954 / NBRC 16129 / PRD-1).